The chain runs to 105 residues: uncharacterized protein (105 aa).

This is an uncharacterized protein from Felis catus (Cat).